A 78-amino-acid chain; its full sequence is RNA-binding protein Hfq (78 aa).

Positions 10-69 (DPFLNALRKEHVPVSIYLVNGIKLQGHIESFDQYVVLLRNTVTQMVYKHAISTVVPARAV) constitute a Sm domain.

It belongs to the Hfq family. Homohexamer.

RNA chaperone that binds small regulatory RNA (sRNAs) and mRNAs to facilitate mRNA translational regulation in response to envelope stress, environmental stress and changes in metabolite concentrations. Also binds with high specificity to tRNAs. This Herminiimonas arsenicoxydans protein is RNA-binding protein Hfq.